A 698-amino-acid polypeptide reads, in one-letter code: Protein arginine N-methyltransferase 7 (698 aa).

2 SAM-dependent MTase PRMT-type domains span residues Gln14–Trp357 and Glu366–Glu698.

It belongs to the class I-like SAM-binding methyltransferase superfamily. Protein arginine N-methyltransferase family. PRMT7 subfamily.

In terms of biological role, essential arginine methyltransferase that can both catalyze the formation of omega-N monomethylarginine (MMA) and symmetrical dimethylarginine (sDMA). Specifically mediates the symmetrical dimethylation of arginine residues in the small nuclear ribonucleoproteins SmD1 and SmD3. This Drosophila mojavensis (Fruit fly) protein is Protein arginine N-methyltransferase 7 (Art7).